The primary structure comprises 322 residues: uncharacterized protein (322 aa).

A disordered region spans residues 269–289 (QDEEEEPRDERRPRRRLGKAQ).

This is an uncharacterized protein from Sinorhizobium fredii (strain NBRC 101917 / NGR234).